Consider the following 542-residue polypeptide: Cytochrome P450 734A6 (542 aa).

The chain crosses the membrane as a helical span at residues 2–22 (GWWGWAAAAAAAAAWVAVKVL). Cysteine 474 is a binding site for heme.

This sequence belongs to the cytochrome P450 family. Heme is required as a cofactor. Highly expressed in leaf sheaths. Expressed in roots, shoot apex, leaf blades, internodes and panicles.

Its subcellular location is the membrane. In terms of biological role, cytochrome P450 involved in brassinosteroids (BRs) inactivation and regulation of BRs homeostasis. Is a multifunctional and multisubstrate enzyme that controls the endogenous bioactive BR content both by direct inactivation of castasterone (CS) and by decreasing the levels of BR precursors. Catalyzes the oxidation of carbon 22 hydroxylated BR intermediates to produce C26 oxidized metabolites. This Oryza sativa subsp. japonica (Rice) protein is Cytochrome P450 734A6 (CYP734A6).